The following is a 106-amino-acid chain: Large ribosomal subunit protein P1A (106 aa).

N-acetylserine is present on Ser2. Positions 73–106 (GGVAGGEAGEAEAEKEEEEAKEESDDDMGFGLFD) are disordered. Positions 81-100 (GEAEAEKEEEEAKEESDDDM) are enriched in acidic residues. A Phosphoserine modification is found at Ser96.

This sequence belongs to the eukaryotic ribosomal protein P1/P2 family. As to quaternary structure, component of the large ribosomal subunit (LSU). Mature yeast ribosomes consist of a small (40S) and a large (60S) subunit. The 40S small subunit contains 1 molecule of ribosomal RNA (18S rRNA) and 33 different proteins (encoded by 57 genes). The large 60S subunit contains 3 rRNA molecules (25S, 5.8S and 5S rRNA) and 46 different proteins (encoded by 81 genes). The 5 acidic ribosomal P-proteins form the stalk structure of the 60S subunit. They are organized as a pentameric complex in which uL10/P0 interacts with 2 heterodimers, P1A-P2B and P1B-P2A. In terms of processing, N-terminally acetylated by acetyltransferase NatA.

It is found in the cytoplasm. Component of the ribosome, a large ribonucleoprotein complex responsible for the synthesis of proteins in the cell. The small ribosomal subunit (SSU) binds messenger RNAs (mRNAs) and translates the encoded message by selecting cognate aminoacyl-transfer RNA (tRNA) molecules. The large subunit (LSU) contains the ribosomal catalytic site termed the peptidyl transferase center (PTC), which catalyzes the formation of peptide bonds, thereby polymerizing the amino acids delivered by tRNAs into a polypeptide chain. The nascent polypeptides leave the ribosome through a tunnel in the LSU and interact with protein factors that function in enzymatic processing, targeting, and the membrane insertion of nascent chains at the exit of the ribosomal tunnel. This chain is Large ribosomal subunit protein P1A, found in Saccharomyces cerevisiae (strain ATCC 204508 / S288c) (Baker's yeast).